Here is a 443-residue protein sequence, read N- to C-terminus: Chromosome partition protein MukF (443 aa).

Residues 209–237 (LDETSGNLRELQDTLNAAGDKLQAQLLRI) are leucine-zipper.

It belongs to the MukF family. In terms of assembly, interacts, and probably forms a ternary complex, with MukE and MukB via its C-terminal region. The complex formation is stimulated by calcium or magnesium. It is required for an interaction between MukE and MukB.

It is found in the cytoplasm. The protein resides in the nucleoid. Involved in chromosome condensation, segregation and cell cycle progression. May participate in facilitating chromosome segregation by condensation DNA from both sides of a centrally located replisome during cell division. Not required for mini-F plasmid partitioning. Probably acts via its interaction with MukB and MukE. Overexpression results in anucleate cells. It has a calcium binding activity. This chain is Chromosome partition protein MukF, found in Actinobacillus pleuropneumoniae serotype 7 (strain AP76).